The following is a 94-amino-acid chain: C-C motif chemokine 17 (94 aa).

The N-terminal stretch at 1 to 23 (MAPLKMLALVTLLLGASLQHIHA) is a signal peptide. 2 cysteine pairs are disulfide-bonded: cysteine 33-cysteine 57 and cysteine 34-cysteine 73.

This sequence belongs to the intercrine beta (chemokine CC) family. In terms of tissue distribution, constitutively expressed in thymus. Detected at lower levels in the lung, colon and small intestine. Expressed in stimulated peripheral blood mononuclear cells, but not in resting cells.

The protein resides in the secreted. In terms of biological role, chemokine, which displays chemotactic activity for T lymphocytes, preferentially Th2 cells, but not monocytes or granulocytes. Therefore plays an important role in a wide range of inflammatory and immunological processes. Acts by binding to CCR4 at T-cell surface. Mediates GM-CSF/CSF2-driven pain and inflammation. In the brain, required to maintain the typical, highly branched morphology of hippocampal microglia under homeostatic conditions. May be important for the appropriate adaptation of microglial morphology and synaptic plasticity to acute lipopolysaccharide (LPS)-induced neuroinflammation. Plays a role in wound healing, mainly by inducing fibroblast migration into the wound. The protein is C-C motif chemokine 17 (CCL17) of Homo sapiens (Human).